The sequence spans 202 residues: uncharacterized protein (202 aa).

Helical transmembrane passes span 34 to 54, 102 to 122, and 125 to 145; these read AAYV…QARI, MGVA…PLVI, and ILPL…FNKA. The tract at residues 165–202 is disordered; that stretch reads NKPAAAVTGTSSNSNNASAKSDGPTITELNENETEKSS. Low complexity predominate over residues 168 to 185; sequence AAAVTGTSSNSNNASAKS. 2 positions are modified to phosphoserine: S185 and S201.

This sequence belongs to the PHO88 family.

Its subcellular location is the endoplasmic reticulum membrane. This is an uncharacterized protein from Schizosaccharomyces pombe (strain 972 / ATCC 24843) (Fission yeast).